A 111-amino-acid chain; its full sequence is Ribosome-binding factor A (111 aa).

The protein belongs to the RbfA family. In terms of assembly, monomer. Binds 30S ribosomal subunits, but not 50S ribosomal subunits or 70S ribosomes.

The protein resides in the cytoplasm. Its function is as follows. One of several proteins that assist in the late maturation steps of the functional core of the 30S ribosomal subunit. Associates with free 30S ribosomal subunits (but not with 30S subunits that are part of 70S ribosomes or polysomes). Required for efficient processing of 16S rRNA. May interact with the 5'-terminal helix region of 16S rRNA. This Helicobacter pylori (strain J99 / ATCC 700824) (Campylobacter pylori J99) protein is Ribosome-binding factor A.